The chain runs to 77 residues: Large ribosomal subunit protein bL28 (77 aa).

It belongs to the bacterial ribosomal protein bL28 family.

The protein is Large ribosomal subunit protein bL28 of Ralstonia pickettii (strain 12J).